Consider the following 528-residue polypeptide: Peptide chain release factor 3 (528 aa).

A tr-type G domain is found at 10–278; the sequence is DKRRTFGIIS…TFVDLAPAPQ (269 aa). GTP-binding positions include 19-26, 87-91, and 141-144; these read SHPDAGKT, DTPGH, and NKLD.

This sequence belongs to the TRAFAC class translation factor GTPase superfamily. Classic translation factor GTPase family. PrfC subfamily.

The protein resides in the cytoplasm. In terms of biological role, increases the formation of ribosomal termination complexes and stimulates activities of RF-1 and RF-2. It binds guanine nucleotides and has strong preference for UGA stop codons. It may interact directly with the ribosome. The stimulation of RF-1 and RF-2 is significantly reduced by GTP and GDP, but not by GMP. This Oleidesulfovibrio alaskensis (strain ATCC BAA-1058 / DSM 17464 / G20) (Desulfovibrio alaskensis) protein is Peptide chain release factor 3.